A 337-amino-acid chain; its full sequence is 3-isopropylmalate dehydrogenase (337 aa).

Residues Arg-88, Arg-98, Arg-122, and Asp-212 each contribute to the substrate site. Residues Asp-212, Asp-236, and Asp-240 each contribute to the Mg(2+) site. Residue 272–284 coordinates NAD(+); that stretch reads GSAPDIAGKGIAD.

It belongs to the isocitrate and isopropylmalate dehydrogenases family. LeuB type 2 subfamily. In terms of assembly, homodimer. The cofactor is Mg(2+). Mn(2+) is required as a cofactor.

It is found in the cytoplasm. It catalyses the reaction (2R,3S)-3-isopropylmalate + NAD(+) = 4-methyl-2-oxopentanoate + CO2 + NADH. The protein operates within amino-acid biosynthesis; L-leucine biosynthesis; L-leucine from 3-methyl-2-oxobutanoate: step 3/4. Functionally, catalyzes the oxidation of 3-carboxy-2-hydroxy-4-methylpentanoate (3-isopropylmalate) to 3-carboxy-4-methyl-2-oxopentanoate. The product decarboxylates to 4-methyl-2 oxopentanoate. The polypeptide is 3-isopropylmalate dehydrogenase (Rhodococcus erythropolis (strain PR4 / NBRC 100887)).